Reading from the N-terminus, the 375-residue chain is Growth/differentiation factor 8 (375 aa).

A signal peptide spans Met-1 to Ala-18. The propeptide occupies Gly-19–Arg-266. N-linked (GlcNAc...) asparagine glycans are attached at residues Asn-47 and Asn-71. 4 disulfide bridges follow: Cys-272/Cys-282, Cys-281/Cys-340, Cys-309/Cys-372, and Cys-313/Cys-374.

It belongs to the TGF-beta family. Homodimer; disulfide-linked. Interacts with WFIKKN2, leading to inhibit its activity. Interacts with FSTL3. Post-translationally, synthesized as large precursor molecule that undergoes proteolytic cleavage to generate an N-terminal propeptide and a disulfide linked C-terminal dimer, which is the biologically active molecule. The circulating form consists of a latent complex of the C-terminal dimer and other proteins, including its propeptide, which maintain the C-terminal dimer in a latent, inactive state. Ligand activation requires additional cleavage of the prodomain by a tolloid-like metalloproteinase.

The protein resides in the secreted. Acts specifically as a negative regulator of skeletal muscle growth. The chain is Growth/differentiation factor 8 (MSTN) from Bubalus bubalis (Domestic water buffalo).